The following is a 266-amino-acid chain: Small ribosomal subunit protein eS1 (266 aa).

The disordered stretch occupies residues 235–266; the sequence is GGAGGAAKASGDDTGAKVERADGYEPPIQETV. Over residues 244–257 the composition is skewed to basic and acidic residues; that stretch reads SGDDTGAKVERADG.

Belongs to the eukaryotic ribosomal protein eS1 family. As to quaternary structure, component of the small ribosomal subunit. Mature ribosomes consist of a small (40S) and a large (60S) subunit. The 40S subunit contains about 33 different proteins and 1 molecule of RNA (18S). The 60S subunit contains about 49 different proteins and 3 molecules of RNA (28S, 5.8S and 5S).

It is found in the cytoplasm. Functionally, component of the small ribosomal subunit. The ribosome is a large ribonucleoprotein complex responsible for the synthesis of proteins in the cell. The polypeptide is Small ribosomal subunit protein eS1 (rps3a) (Oryzias latipes (Japanese rice fish)).